Here is a 103-residue protein sequence, read N- to C-terminus: MTKSELIEILARRQAHLKSDDVDLAVKSLLEMMGQALSDGDRIEIRGFGSFSLHYRPPRLGRNPKTGESVALPGKHVPHFKPGKELRERVSSVVPVDMSDTTD.

The disordered stretch occupies residues 59–82 (RLGRNPKTGESVALPGKHVPHFKP).

This sequence belongs to the bacterial histone-like protein family. Heterodimer of an alpha and a beta chain.

Functionally, this protein is one of the two subunits of integration host factor, a specific DNA-binding protein that functions in genetic recombination as well as in transcriptional and translational control. This chain is Integration host factor subunit beta, found in Xanthomonas oryzae pv. oryzae (strain MAFF 311018).